Consider the following 221-residue polypeptide: Germin-like protein subfamily 1 member 19 (221 aa).

The signal sequence occupies residues 1 to 21 (MKVSMSLILITLSALVTIAKA). Residues Cys-31 and Cys-48 are joined by a disulfide bond. One can recognise a Cupin type-1 domain in the interval 76 to 213 (SNVTTVNVDQ…AFQLDVNVVK (138 aa)). The N-linked (GlcNAc...) asparagine glycan is linked to Asn-77. Mn(2+) contacts are provided by His-110, His-112, Glu-117, and His-159.

This sequence belongs to the germin family. Oligomer (believed to be a pentamer but probably hexamer).

Its subcellular location is the secreted. The protein localises to the extracellular space. The protein resides in the apoplast. Functionally, may play a role in plant defense. Probably has no oxalate oxidase activity even if the active site is conserved. In Arabidopsis thaliana (Mouse-ear cress), this protein is Germin-like protein subfamily 1 member 19.